An 88-amino-acid polypeptide reads, in one-letter code: Large ribosomal subunit protein bL27 (88 aa).

The tract at residues 1 to 22 (MAHKKGASSSRNGRDSNAQRLG) is disordered. Residues 7–19 (ASSSRNGRDSNAQ) are compositionally biased toward polar residues.

Belongs to the bacterial ribosomal protein bL27 family.

This Mycolicibacterium gilvum (strain PYR-GCK) (Mycobacterium gilvum (strain PYR-GCK)) protein is Large ribosomal subunit protein bL27.